The following is a 480-amino-acid chain: Nuclear receptor subfamily 6 group A member 1 (480 aa).

The segment at 1–32 (MERDEPPPSGGGGGGGSAGFLEPPAALPPPPR) is disordered. The segment at residues 57 to 132 (QRTCLICGDR…MGMNRKAIRE (76 aa)) is a DNA-binding region (nuclear receptor). Zn(2+) is bound by residues cysteine 60, cysteine 63, cysteine 77, cysteine 80, cysteine 96, cysteine 102, cysteine 112, and cysteine 115. NR C4-type zinc fingers lie at residues 60-80 (CLICGDRATGLHYGIISCEGC) and 96-120 (CSRDKNCVMSRKQRNRCQYCRLLKC). 2 disordered regions span residues 131–150 (REDGMPGGRNKSIGPVQISE) and 162–199 (FEEEANHWSNHGDSDHSSPGNRASESNQPSPGSTLSSS). Over residues 165-177 (EANHWSNHGDSDH) the composition is skewed to basic and acidic residues. Residues 172–253 (HGDSDHSSPG…RSLDPQSYSL (82 aa)) form a sufficient for interaction with UIMC1 region. The segment covering 187-199 (SNQPSPGSTLSSS) has biased composition (low complexity). In terms of domain architecture, NR LBD spans 249-480 (QSYSLIHQLL…HSCKTSVGKE (232 aa)).

The protein belongs to the nuclear hormone receptor family. NR6 subfamily. Homodimer. Interacts with UIMC1. As to expression, shows highest expression in the germ cells of the adult testis.

The protein localises to the nucleus. In terms of biological role, orphan nuclear receptor that binds to a response element containing the sequence 5'-TCAAGGTCA-3'. Acts as a regulator of embryonic stem cell pluripotency by mediating repression of POU5F1/OCT4: binds to the DR0 element within the POU5F1/OCT4 promoter and inhibits POU5F1/OCT4 expression during embryonic stem cell differentiation. Involved in the regulation of gene expression in germ cell development during gametogenesis. In Homo sapiens (Human), this protein is Nuclear receptor subfamily 6 group A member 1 (NR6A1).